The sequence spans 1317 residues: DNA-directed RNA polymerase subunit beta' (1317 aa).

Residues cysteine 60, cysteine 62, cysteine 75, and cysteine 78 each coordinate Zn(2+). Residues 183-209 (ELEDEGAKSDVKRKVRDGGEREMRQLR) form a disordered region. Positions 535, 537, and 539 each coordinate Mg(2+). Zn(2+)-binding residues include cysteine 890, cysteine 967, cysteine 974, and cysteine 977.

The protein belongs to the RNA polymerase beta' chain family. In terms of assembly, the RNAP catalytic core consists of 2 alpha, 1 beta, 1 beta' and 1 omega subunit. When a sigma factor is associated with the core the holoenzyme is formed, which can initiate transcription. The cofactor is Mg(2+). Zn(2+) serves as cofactor.

It catalyses the reaction RNA(n) + a ribonucleoside 5'-triphosphate = RNA(n+1) + diphosphate. DNA-dependent RNA polymerase catalyzes the transcription of DNA into RNA using the four ribonucleoside triphosphates as substrates. This chain is DNA-directed RNA polymerase subunit beta', found in Mycolicibacterium vanbaalenii (strain DSM 7251 / JCM 13017 / BCRC 16820 / KCTC 9966 / NRRL B-24157 / PYR-1) (Mycobacterium vanbaalenii).